A 186-amino-acid chain; its full sequence is Ribosome-recycling factor (186 aa).

The segment at 140 to 163 is disordered; it reads LKKAEKDGDIGQDEGRSLSERVQK.

It belongs to the RRF family.

The protein resides in the cytoplasm. Functionally, responsible for the release of ribosomes from messenger RNA at the termination of protein biosynthesis. May increase the efficiency of translation by recycling ribosomes from one round of translation to another. This is Ribosome-recycling factor from Rhizobium rhizogenes (strain K84 / ATCC BAA-868) (Agrobacterium radiobacter).